The primary structure comprises 283 residues: Nucleoid occlusion protein (283 aa).

The segment at residues 148–167 is a DNA-binding region (H-T-H motif); that stretch reads EALAQRLGKGQSTIANKLRL.

The protein belongs to the ParB family.

It localises to the cytoplasm. The protein localises to the nucleoid. Its function is as follows. Effects nucleoid occlusion by binding relatively nonspecifically to DNA and preventing the assembly of the division machinery in the vicinity of the nucleoid, especially under conditions that disturb the cell cycle. It helps to coordinate cell division and chromosome segregation by preventing the formation of the Z ring through the nucleoid, which would cause chromosome breakage. The polypeptide is Nucleoid occlusion protein (noc) (Bacillus subtilis (strain 168)).